A 619-amino-acid polypeptide reads, in one-letter code: Dihydroxy-acid dehydratase 1 (619 aa).

Asp-81 contributes to the Mg(2+) binding site. A [2Fe-2S] cluster-binding site is contributed by Cys-122. Mg(2+)-binding residues include Asp-123 and Lys-124. Residue Lys-124 is modified to N6-carboxylysine. Cys-198 is a binding site for [2Fe-2S] cluster. Glu-494 serves as a coordination point for Mg(2+). The Proton acceptor role is filled by Ser-520.

The protein belongs to the IlvD/Edd family. In terms of assembly, homodimer. Requires [2Fe-2S] cluster as cofactor. It depends on Mg(2+) as a cofactor.

The enzyme catalyses (2R)-2,3-dihydroxy-3-methylbutanoate = 3-methyl-2-oxobutanoate + H2O. It catalyses the reaction (2R,3R)-2,3-dihydroxy-3-methylpentanoate = (S)-3-methyl-2-oxopentanoate + H2O. Its pathway is amino-acid biosynthesis; L-isoleucine biosynthesis; L-isoleucine from 2-oxobutanoate: step 3/4. The protein operates within amino-acid biosynthesis; L-valine biosynthesis; L-valine from pyruvate: step 3/4. Functions in the biosynthesis of branched-chain amino acids. Catalyzes the dehydration of (2R,3R)-2,3-dihydroxy-3-methylpentanoate (2,3-dihydroxy-3-methylvalerate) into 2-oxo-3-methylpentanoate (2-oxo-3-methylvalerate) and of (2R)-2,3-dihydroxy-3-methylbutanoate (2,3-dihydroxyisovalerate) into 2-oxo-3-methylbutanoate (2-oxoisovalerate), the penultimate precursor to L-isoleucine and L-valine, respectively. This Bordetella bronchiseptica (strain ATCC BAA-588 / NCTC 13252 / RB50) (Alcaligenes bronchisepticus) protein is Dihydroxy-acid dehydratase 1.